We begin with the raw amino-acid sequence, 615 residues long: Chaperone protein HscA homolog (615 aa).

This sequence belongs to the heat shock protein 70 family.

In terms of biological role, chaperone involved in the maturation of iron-sulfur cluster-containing proteins. Has a low intrinsic ATPase activity which is markedly stimulated by HscB. This Aeromonas salmonicida (strain A449) protein is Chaperone protein HscA homolog.